Reading from the N-terminus, the 146-residue chain is Large ribosomal subunit protein uL15 (146 aa).

Residues 1–13 (MKLHELKPAEGSR) are compositionally biased toward basic and acidic residues. Positions 1–51 (MKLHELKPAEGSRKVRNRVGRGIGSGNGKTAGKGHKGQNARSGGGVRLGFE) are disordered. 2 stretches are compositionally biased toward gly residues: residues 21–31 (RGIGSGNGKTA) and 42–51 (SGGGVRLGFE).

It belongs to the universal ribosomal protein uL15 family. As to quaternary structure, part of the 50S ribosomal subunit.

In terms of biological role, binds to the 23S rRNA. The sequence is that of Large ribosomal subunit protein uL15 from Bacillus cereus (strain G9842).